The following is a 530-amino-acid chain: Na(+)/H(+) antiporter NhaB (530 aa).

12 consecutive transmembrane segments (helical) span residues Phe13–Pro33, Leu34–Phe54, Leu90–Met110, Ile121–Phe141, Phe145–Ile165, Leu205–Pro225, Phe241–Ile261, Gly306–Ile326, Glu351–Ile371, Leu393–Gly413, Gly455–Tyr475, and Met481–Leu501.

Belongs to the NhaB Na(+)/H(+) (TC 2.A.34) antiporter family.

The protein resides in the cell inner membrane. The catalysed reaction is 2 Na(+)(in) + 3 H(+)(out) = 2 Na(+)(out) + 3 H(+)(in). In terms of biological role, na(+)/H(+) antiporter that extrudes sodium in exchange for external protons. In Aliivibrio fischeri (strain ATCC 700601 / ES114) (Vibrio fischeri), this protein is Na(+)/H(+) antiporter NhaB.